Consider the following 2026-residue polypeptide: Fatty acid synthase subunit beta (2026 aa).

An acetyltransferase (AT) domain region spans residues isoleucine 148 to alanine 526. Serine 268 serves as the catalytic For acetyltransferase activity. The interval serine 579–aspartate 824 is enoyl reductase (ER) domain. The segment at serine 1130–isoleucine 1604 is dehydratase (DH) domain. Positions proline 1512–threonine 1625 constitute a MaoC-like domain. Positions tyrosine 1643–serine 2016 are malonyl/palmitoyl transferase (MT/PT) domain. The active-site For malonyltransferase activity is the serine 1788.

This sequence belongs to the fungal fatty acid synthetase subunit beta family. In terms of assembly, [Alpha(6)beta(6)] hexamers of two multifunctional subunits (alpha and beta).

The enzyme catalyses acetyl-CoA + n malonyl-CoA + 2n NADPH + 4n H(+) = a long-chain-acyl-CoA + n CoA + n CO2 + 2n NADP(+).. It catalyses the reaction holo-[ACP] + acetyl-CoA = acetyl-[ACP] + CoA. It carries out the reaction holo-[ACP] + malonyl-CoA = malonyl-[ACP] + CoA. The catalysed reaction is a (3R)-hydroxyacyl-[ACP] = a (2E)-enoyl-[ACP] + H2O. The enzyme catalyses a 2,3-saturated acyl-[ACP] + NAD(+) = a (2E)-enoyl-[ACP] + NADH + H(+). It catalyses the reaction (9Z)-octadecenoyl-[ACP] + H2O = (9Z)-octadecenoate + holo-[ACP] + H(+). It functions in the pathway secondary metabolite biosynthesis. In terms of biological role, fatty acid synthase beta subunit; part of the gene cluster that mediates the biosynthesis of oryzines, natural products with an unusual maleidride backbone. The two subunits of the fungal fatty acid synthase oryfasA and oryfasB probably form octenoic acid. This fatty acid is most likely activated by the acyl-CoA ligase oryP to give octenyl-CoA before the citrate synthase-like protein oryE catalyzes condensation with oxaloacetate to form tricarboxylic acid. The next steps of the pathways are conjectural, but a favorite possible route has been proposed, beginning with decarboxylation and concomitant dehydration by the decarboxylase oryM, followed by tautomerization, which may lead to the production of a diene intermediate. Reduction of this diene intermediate could give the known metabolite piliformic acid. On the pathway to oryzine B and oryzine A, however, hydroxylation of the diene by the alpha-ketoglutarate-dependent dioxygenase oryG and lactonisation by the lactonohydrolases oryH or oryL could give oryzine B directly. Finally, enoyl reduction by the dehydrogenase oryD would then convert oryzine B into oryzine A. This is Fatty acid synthase subunit beta from Aspergillus oryzae (strain ATCC 42149 / RIB 40) (Yellow koji mold).